The primary structure comprises 168 residues: PAPRGTPQIEVTFEVDANGILNVKAEDKGTGKSEKITITNDKGRLSQEEIERMVREAEEFAEEDKKVKERIDARNGLETYVYNMKNQINDKDKLADKLESDEKEKIETAVKEALEWLDDNQSAEKEDYEEKLKEVEAVCNPIITAVYQRSGGASGGSSSSEEDGHDEL.

An N-linked (GlcNAc...) asparagine glycan is attached at Asn120. The segment at 148–168 is disordered; that stretch reads QRSGGASGGSSSSEEDGHDEL. The Prevents secretion from ER signature appears at 165–168; the sequence is HDEL.

The protein belongs to the heat shock protein 70 family.

The protein localises to the endoplasmic reticulum lumen. In terms of biological role, probably plays a role in facilitating the assembly of multimeric protein complexes inside the ER. The protein is Luminal-binding protein 3 (BIP3) of Nicotiana tabacum (Common tobacco).